The chain runs to 424 residues: Folate-like transporter 3 (424 aa).

Asparagine 35 carries an N-linked (GlcNAc...) asparagine glycan. 5 helical membrane passes run 55–75 (VALI…ILII), 78–98 (LSYF…CMQL), 101–119 (LFYG…YIYV), 136–156 (ALLV…GLNW), and 164–184 (IINL…PHVP). Residue asparagine 254 is glycosylated (N-linked (GlcNAc...) asparagine). Helical transmembrane passes span 313-333 (GLLF…CYII), 361-381 (LFGI…AIVI), and 392-412 (FVVY…IFGI).

The protein belongs to the reduced folate carrier (RFC) transporter (TC 2.A.48) family.

Its subcellular location is the membrane. This chain is Folate-like transporter 3 (folt-3), found in Caenorhabditis elegans.